The chain runs to 2038 residues: Homeotic protein female sterile (2038 aa).

In terms of domain architecture, Bromo 1 spans 34 to 140; that stretch reads RNTNQLQYLI…KVFLQKIESM (107 aa). The disordered stretch occupies residues 145 to 284; it reads LELEPVTAKG…TTAMAGGVGG (140 aa). Composition is skewed to low complexity over residues 177-209 and 268-279; these read GSGTSSAAVTSGPGSGSTKVSVAASSAQQSGLQ and PGSTNTTTTAMA. A helical transmembrane segment spans residues 330–350; that stretch reads AAVAAAAAAAAAAAAAAGGAA. Residues 396–432 are disordered; that stretch reads KGVKRKADTTTPTANAFESPYTQMDSKSAKIATRRES. A compositionally biased stretch (polar residues) spans 404–421; the sequence is TTTPTANAFESPYTQMDS. The chain crosses the membrane as a helical span at residues 451-471; the sequence is VSGVPGLGGLVAGGVAGVAVA. S452 carries the post-translational modification Phosphoserine. One can recognise a Bromo 2 domain in the interval 475–584; it reads EKLSDALKSC…DVFEMRYANI (110 aa). Disordered stretches follow at residues 590–655 and 677–735; these read ANAA…ERSA and EASA…SVPG. The span at 593 to 619 shows a compositional bias: basic residues; sequence AHHHGHGHGHGHGHGHGHGHGHGHGHG. Residues 636–649 show a composition bias toward acidic residues; it reads SSEDSSDTENESNS. Over residues 681-694 the composition is skewed to basic residues; sequence KKKAKKKLKEKKKS. Residues 711 to 735 show a composition bias toward gly residues; sequence TGGGANAGGAGGPGSGGHGSVSVPG. 3 consecutive transmembrane segments (helical) span residues 750 to 770, 790 to 810, and 816 to 830; these read LNALLGGSLVGHGGAAVAGGV, MAGGGAAAGAGFGAGVTAAGA, and AGTLAGALAAGAAAG. Disordered stretches follow at residues 832–858, 891–956, 1016–1139, 1217–1260, 1384–1416, 1502–1530, 1580–1616, 1645–1728, 1745–1918, and 1957–2023; these read GGTTAGSGSSKGAKSKGGRGAKGSGAG, AGAA…SYDE, CLRK…GGNL, AVSA…ATVA, QPAGPQQQQQQQQQQPFGHQQQQQQQQQQQQQQ, MQQMQLQQQHHQQQQQQTHQQQQQHQQQH, IESMMPSPPDKQQLQQHQKVLPPQQSPSDMKLHPNAA, WSSL…VAQA, AAAA…SGAI, and MESG…GQID. Residues 874–894 form a helical membrane-spanning segment; that stretch reads GAAGAAAGAGSVGGVGGAGAA. Residues 910-927 show a composition bias toward gly residues; the sequence is GAGGGVGGANASAGGAGA. An NET domain is found at 942–1024; it reads DSEEEDTAKP…SCLRKKTHKK (83 aa). Phosphoserine is present on S943. Basic residues predominate over residues 1017–1027; the sequence is LRKKTHKKPSG. The segment covering 1028-1046 has biased composition (basic and acidic residues); that stretch reads KSKDEQMAEKKQELEKRLQ. The segment covering 1079–1100 has biased composition (low complexity); that stretch reads SSSSSSSDSSSSSSSDSSSSDS. Polar residues-rich tracts occupy residues 1121–1131 and 1222–1232; these read SNGSNVNNPSI and TGQQHNKNGPN. Positions 1645–1665 are enriched in low complexity; the sequence is WSSLASANSPQSHTSSSSSSS. S1653 carries the phosphoserine modification. A compositionally biased stretch (basic and acidic residues) spans 1680–1708; it reads KAKERDRLKLLEAAEKEKKNQKEAAEKEQ. 2 stretches are compositionally biased toward low complexity: residues 1716-1728 and 1745-1760; these read SSSSLTSAAVAQA and AAAAALASSASNPSGG. A helical membrane pass occupies residues 1731–1751; that stretch reads IAAATAAAAVTLGAAAAAALA. A compositionally biased stretch (basic and acidic residues) spans 1776 to 1791; it reads GDRDRDRDRERERERS. The span at 1800–1813 shows a compositional bias: low complexity; the sequence is NGNNSSNSANSNGP. Composition is skewed to gly residues over residues 1814 to 1828 and 1835 to 1856; these read GSAGSGGSGGGGGSG and PNSGGGGTANSNSGGGGGGGGP. Low complexity predominate over residues 1857 to 1884; sequence ALLNAGSNSNSGVGSGGAASSNSNSSVG. Over residues 1885 to 1915 the composition is skewed to gly residues; the sequence is GIVGSGGPGSNSQGSSGGGGGGPASGGGMGS. Residues 1939–1959 traverse the membrane as a helical segment; that stretch reads VAAAVAAQAILAASPLGAMES. A phosphoserine mark is found at S1980 and S1988. A compositionally biased stretch (low complexity) spans 1986–1997; the sequence is QSSPAQQSPQDR. A compositionally biased stretch (basic and acidic residues) spans 1998–2017; it reads AAAKRAEQRRAEQERRRREA.

The protein localises to the membrane. Its function is as follows. Required maternally for proper expression of other homeotic genes involved in pattern formation, such as Ubx. This chain is Homeotic protein female sterile (fs(1)h), found in Drosophila melanogaster (Fruit fly).